Reading from the N-terminus, the 706-residue chain is Polyribonucleotide nucleotidyltransferase (706 aa).

Mg(2+)-binding residues include aspartate 488 and aspartate 494. The KH domain maps to 555 to 614 (PRLFTMKINPDKIRDVIGKGGSVIRALTEETGTQINIDEDGTITIASADPAKAEEAKRRI). The region spanning 624–692 (GKIYEGPITK…EKGRIKLSMK (69 aa)) is the S1 motif domain.

The protein belongs to the polyribonucleotide nucleotidyltransferase family. It depends on Mg(2+) as a cofactor.

The protein resides in the cytoplasm. The enzyme catalyses RNA(n+1) + phosphate = RNA(n) + a ribonucleoside 5'-diphosphate. In terms of biological role, involved in mRNA degradation. Catalyzes the phosphorolysis of single-stranded polyribonucleotides processively in the 3'- to 5'-direction. The sequence is that of Polyribonucleotide nucleotidyltransferase from Albidiferax ferrireducens (strain ATCC BAA-621 / DSM 15236 / T118) (Rhodoferax ferrireducens).